Reading from the N-terminus, the 367-residue chain is UDP-N-acetylglucosamine--N-acetylmuramyl-(pentapeptide) pyrophosphoryl-undecaprenol N-acetylglucosamine transferase (367 aa).

UDP-N-acetyl-alpha-D-glucosamine is bound by residues Thr-15 to Gly-17, Asn-127, Arg-163, Ser-191, Ile-249, and Gln-294.

The protein belongs to the glycosyltransferase 28 family. MurG subfamily.

The protein localises to the cell inner membrane. It carries out the reaction di-trans,octa-cis-undecaprenyl diphospho-N-acetyl-alpha-D-muramoyl-L-alanyl-D-glutamyl-meso-2,6-diaminopimeloyl-D-alanyl-D-alanine + UDP-N-acetyl-alpha-D-glucosamine = di-trans,octa-cis-undecaprenyl diphospho-[N-acetyl-alpha-D-glucosaminyl-(1-&gt;4)]-N-acetyl-alpha-D-muramoyl-L-alanyl-D-glutamyl-meso-2,6-diaminopimeloyl-D-alanyl-D-alanine + UDP + H(+). It participates in cell wall biogenesis; peptidoglycan biosynthesis. In terms of biological role, cell wall formation. Catalyzes the transfer of a GlcNAc subunit on undecaprenyl-pyrophosphoryl-MurNAc-pentapeptide (lipid intermediate I) to form undecaprenyl-pyrophosphoryl-MurNAc-(pentapeptide)GlcNAc (lipid intermediate II). This is UDP-N-acetylglucosamine--N-acetylmuramyl-(pentapeptide) pyrophosphoryl-undecaprenol N-acetylglucosamine transferase from Burkholderia pseudomallei (strain 668).